The chain runs to 208 residues: Uracil phosphoribosyltransferase (208 aa).

Residues arginine 78, arginine 103, and 130–138 (DPMLATANS) each bind 5-phospho-alpha-D-ribose 1-diphosphate. Uracil contacts are provided by residues isoleucine 193 and 198–200 (GDA). Aspartate 199 is a binding site for 5-phospho-alpha-D-ribose 1-diphosphate.

This sequence belongs to the UPRTase family. Mg(2+) is required as a cofactor.

The enzyme catalyses UMP + diphosphate = 5-phospho-alpha-D-ribose 1-diphosphate + uracil. It participates in pyrimidine metabolism; UMP biosynthesis via salvage pathway; UMP from uracil: step 1/1. With respect to regulation, allosterically activated by GTP. Functionally, catalyzes the conversion of uracil and 5-phospho-alpha-D-ribose 1-diphosphate (PRPP) to UMP and diphosphate. The chain is Uracil phosphoribosyltransferase from Brucella ovis (strain ATCC 25840 / 63/290 / NCTC 10512).